The primary structure comprises 154 residues: Aspartate carbamoyltransferase regulatory chain (154 aa).

Zn(2+) is bound by residues Cys-109, Cys-114, Cys-138, and Cys-141.

It belongs to the PyrI family. In terms of assembly, contains catalytic and regulatory chains. It depends on Zn(2+) as a cofactor.

In terms of biological role, involved in allosteric regulation of aspartate carbamoyltransferase. The sequence is that of Aspartate carbamoyltransferase regulatory chain from Pectobacterium carotovorum subsp. carotovorum (strain PC1).